The chain runs to 336 residues: Holliday junction branch migration complex subunit RuvB (336 aa).

The large ATPase domain (RuvB-L) stretch occupies residues M1 to Y175. ATP-binding positions include L14, R15, G56, K59, T60, T61, E122–F124, R165, Y175, and R212. T60 is a Mg(2+) binding site. The segment at E176–G253 is small ATPAse domain (RuvB-S). The interval E256–F336 is head domain (RuvB-H). DNA-binding residues include R310 and R315.

It belongs to the RuvB family. In terms of assembly, homohexamer. Forms an RuvA(8)-RuvB(12)-Holliday junction (HJ) complex. HJ DNA is sandwiched between 2 RuvA tetramers; dsDNA enters through RuvA and exits via RuvB. An RuvB hexamer assembles on each DNA strand where it exits the tetramer. Each RuvB hexamer is contacted by two RuvA subunits (via domain III) on 2 adjacent RuvB subunits; this complex drives branch migration. In the full resolvosome a probable DNA-RuvA(4)-RuvB(12)-RuvC(2) complex forms which resolves the HJ.

The protein resides in the cytoplasm. The catalysed reaction is ATP + H2O = ADP + phosphate + H(+). Its function is as follows. The RuvA-RuvB-RuvC complex processes Holliday junction (HJ) DNA during genetic recombination and DNA repair, while the RuvA-RuvB complex plays an important role in the rescue of blocked DNA replication forks via replication fork reversal (RFR). RuvA specifically binds to HJ cruciform DNA, conferring on it an open structure. The RuvB hexamer acts as an ATP-dependent pump, pulling dsDNA into and through the RuvAB complex. RuvB forms 2 homohexamers on either side of HJ DNA bound by 1 or 2 RuvA tetramers; 4 subunits per hexamer contact DNA at a time. Coordinated motions by a converter formed by DNA-disengaged RuvB subunits stimulates ATP hydrolysis and nucleotide exchange. Immobilization of the converter enables RuvB to convert the ATP-contained energy into a lever motion, pulling 2 nucleotides of DNA out of the RuvA tetramer per ATP hydrolyzed, thus driving DNA branch migration. The RuvB motors rotate together with the DNA substrate, which together with the progressing nucleotide cycle form the mechanistic basis for DNA recombination by continuous HJ branch migration. Branch migration allows RuvC to scan DNA until it finds its consensus sequence, where it cleaves and resolves cruciform DNA. The chain is Holliday junction branch migration complex subunit RuvB from Helicobacter hepaticus (strain ATCC 51449 / 3B1).